The sequence spans 610 residues: Glutamine--fructose-6-phosphate aminotransferase [isomerizing] (610 aa).

C2 functions as the Nucleophile; for GATase activity in the catalytic mechanism. Residues 2–218 (CGIVGAVAQR…EGDIAEITRR (217 aa)) form the Glutamine amidotransferase type-2 domain. 2 consecutive SIS domains span residues 278-426 (IVDS…VKGH) and 459-600 (LAED…VDQP). K605 (for Fru-6P isomerization activity) is an active-site residue.

In terms of assembly, homodimer.

It localises to the cytoplasm. It carries out the reaction D-fructose 6-phosphate + L-glutamine = D-glucosamine 6-phosphate + L-glutamate. In terms of biological role, catalyzes the first step in hexosamine metabolism, converting fructose-6P into glucosamine-6P using glutamine as a nitrogen source. This chain is Glutamine--fructose-6-phosphate aminotransferase [isomerizing], found in Haemophilus influenzae (strain ATCC 51907 / DSM 11121 / KW20 / Rd).